The following is a 199-amino-acid chain: Recombination protein RecR (199 aa).

A C4-type zinc finger spans residues 57-72 (CSICFNLTDTDPCAIC). In terms of domain architecture, Toprim spans 80–175 (RLLMVVEEAK…KVTRIAHGLP (96 aa)).

This sequence belongs to the RecR family.

May play a role in DNA repair. It seems to be involved in an RecBC-independent recombinational process of DNA repair. It may act with RecF and RecO. In Carboxydothermus hydrogenoformans (strain ATCC BAA-161 / DSM 6008 / Z-2901), this protein is Recombination protein RecR.